We begin with the raw amino-acid sequence, 373 residues long: NAD-dependent protein deacylase SRT2 (373 aa).

A mitochondrion-targeting transit peptide spans 1–47 (MNMRRVFGGVSTDLFPSRSMYRPLQSGGNLVMLFKGCRRFVRTTCRV). The Deacetylase sirtuin-type domain occupies 75-373 (DPPNMEDIHK…DVGSLSVPAL (299 aa)). NAD(+) is bound by residues 100–120 (GAGVSTECGIPDYRSPNGAYS) and 179–182 (QNVD). Histidine 196 (proton acceptor) is an active-site residue. Zn(2+) contacts are provided by cysteine 204, cysteine 207, cysteine 271, and cysteine 274. Residues 311–313 (GSS), 337–339 (NIG), and valine 355 each bind NAD(+).

The protein belongs to the sirtuin family. Class II subfamily. Binds to the promoter region of genes influenced by ethylene. Interacts with ENAP1; this interaction is enhanced in the presence of ethylene. Requires Zn(2+) as cofactor.

It localises to the mitochondrion matrix. Its subcellular location is the nucleus. The enzyme catalyses N(6)-acetyl-L-lysyl-[protein] + NAD(+) + H2O = 2''-O-acetyl-ADP-D-ribose + nicotinamide + L-lysyl-[protein]. Functionally, NAD-dependent protein deacylase. Catalyzes the NAD-dependent hydrolysis of acyl groups from lysine residues. Involved in responses to ethylene leading to the transcriptional repression of some ethylene-responsive genes via the regulation of histone acetylation H3K9Ac. Negatively regulates plant basal defense against plant pathogens, possibly by suppressing salicylic acid biosynthesis. The sequence is that of NAD-dependent protein deacylase SRT2 from Arabidopsis thaliana (Mouse-ear cress).